Reading from the N-terminus, the 185-residue chain is Ribosome-recycling factor (185 aa).

This sequence belongs to the RRF family.

The protein localises to the cytoplasm. In terms of biological role, responsible for the release of ribosomes from messenger RNA at the termination of protein biosynthesis. May increase the efficiency of translation by recycling ribosomes from one round of translation to another. In Dehalococcoides mccartyi (strain CBDB1), this protein is Ribosome-recycling factor.